The chain runs to 458 residues: Dihydrolipoyllysine-residue acetyltransferase component of pyruvate dehydrogenase complex, mitochondrial (458 aa).

A mitochondrion-targeting transit peptide spans 1–28 (MIVPVLSRQALRHASVARVALPSLTRWY). Residues 34 to 110 (HTVVKMPALS…AVGNPIAILV (77 aa)) form the Lipoyl-binding domain. Lys75 carries the post-translational modification N6-lipoyllysine. The interval 126–164 (DAGGETSPAVPKDEPKNESTASAPTPAPTPAPEPENTSF) is disordered. The region spanning 177-214 (NALPAAKRLAREKGIDLRNVKGSGPGGKITEEDVKKAL) is the Peripheral subunit-binding (PSBD) domain. Residues His431 and Asp435 contribute to the active site.

Belongs to the 2-oxoacid dehydrogenase family. The cofactor is (R)-lipoate.

Its subcellular location is the mitochondrion matrix. It catalyses the reaction N(6)-[(R)-dihydrolipoyl]-L-lysyl-[protein] + acetyl-CoA = N(6)-[(R)-S(8)-acetyldihydrolipoyl]-L-lysyl-[protein] + CoA. Functionally, the pyruvate dehydrogenase complex catalyzes the overall conversion of pyruvate to acetyl-CoA and CO(2). It contains multiple copies of three enzymatic components: pyruvate dehydrogenase (E1), dihydrolipoamide acetyltransferase (E2) and lipoamide dehydrogenase (E3). The polypeptide is Dihydrolipoyllysine-residue acetyltransferase component of pyruvate dehydrogenase complex, mitochondrial (mrp-3) (Neurospora crassa (strain ATCC 24698 / 74-OR23-1A / CBS 708.71 / DSM 1257 / FGSC 987)).